The sequence spans 89 residues: Small ribosomal subunit protein uS14 (89 aa).

It belongs to the universal ribosomal protein uS14 family. In terms of assembly, part of the 30S ribosomal subunit. Contacts proteins S3 and S10.

Functionally, binds 16S rRNA, required for the assembly of 30S particles and may also be responsible for determining the conformation of the 16S rRNA at the A site. This is Small ribosomal subunit protein uS14 from Chlorobium limicola (strain DSM 245 / NBRC 103803 / 6330).